A 131-amino-acid chain; its full sequence is Protein FAM107B (131 aa).

The residue at position 2 (A2) is an N-acetylalanine. Disordered stretches follow at residues M39 to S78 and K100 to S131. K50 carries the post-translational modification N6-acetyllysine. Basic and acidic residues predominate over residues E52–S78. Residues R61–V112 are a coiled coil.

The protein belongs to the FAM107 family.

The protein is Protein FAM107B of Rattus norvegicus (Rat).